The following is an 805-amino-acid chain: Shutoff protein (805 aa).

Residues 1 to 88 form a disordered region; it reads MESVEKEDSL…QVGRGDQRHG (88 aa). The segment covering 18–29 has biased composition (polar residues); it reads TTASTDAANAPT. Basic and acidic residues-rich tracts occupy residues 59-70 and 79-88; these read RSVPTEDKKQDQ and QVGRGDQRHG. Residues 280 to 345 are binding to host EIF4G; the sequence is VMSELIVRRA…AVLVTVELEC (66 aa). In terms of domain architecture, RRM spans 348–466; it reads RFFADPEMQR…DLWTAFNERS (119 aa). Phosphotyrosine; by host is present on residues Tyr365 and Tyr682. The interval 684 to 805 is disordered; it reads DPQSGEELNP…AGTACSPTQP (122 aa). Residues 726–742 are compositionally biased toward gly residues; the sequence is GRGGILGQSGRGGFGRG. A compositionally biased stretch (basic residues) spans 754 to 763; that stretch reads RSFRGRRGVR.

This sequence belongs to the adenoviridae shutoff protein family. As to quaternary structure, monomer. Interacts with hexon protein; this interaction allows chaperoning and trimerization of hexon proteins. Interacts (via N-terminus) with host initiation factor EIF4G (via C-terminus). Interacts (via RRM domain) with viral mRNAs that contain the tripartite leader; this interaction allows ribosome shunting and expression of viral late mRNAs. In terms of processing, might be cleaved by the viral protease. Phosphorylated. Tyrosine phosphorylation enhances preferential binding to tripartite leader mRNAs and allows ribosome shunting. Post-translationally, methylated. Asymmetric dimethylation by host PRMT1 of the Arg/Gly-rich region may regulate shutoff protein binding to hexon and promote the capsid assembly in the nucleus.

It localises to the host cytoplasm. Protein that inhibits host translation while promoting late viral translation by ribosome shunting. Blocks host cap-dependent translation by binding to eIF4G, displacing MKNK1 from cap initiation complexes and preventing EIF4E phosphorylation. Binds to the tripartite leader sequence of viral late mRNAs and recruits host eIF4G, PABPC1/poly-A binding protein and 40S ribosomes subunits on viral mRNAs, allowing ribosome shunting and efficient translation of late viral mRNAs even though conventional translation via ribosome scanning from the cap has been shut off in the host cell. During assembly, acts as a chaperone protein that helps hexon proteins assembly into trimers. The sequence is that of Shutoff protein from Homo sapiens (Human).